Reading from the N-terminus, the 310-residue chain is Aspartate carbamoyltransferase catalytic subunit 3 (310 aa).

Residues Arg-55 and Thr-56 each coordinate carbamoyl phosphate. Lys-85 lines the L-aspartate pocket. The carbamoyl phosphate site is built by Arg-106, His-134, and Gln-137. L-aspartate contacts are provided by Arg-167 and Arg-228. Carbamoyl phosphate-binding residues include Leu-266 and Pro-267.

This sequence belongs to the aspartate/ornithine carbamoyltransferase superfamily. ATCase family. Heterododecamer (2C3:3R2) of six catalytic PyrB chains organized as two trimers (C3), and six regulatory PyrI chains organized as three dimers (R2).

The enzyme catalyses carbamoyl phosphate + L-aspartate = N-carbamoyl-L-aspartate + phosphate + H(+). Its pathway is pyrimidine metabolism; UMP biosynthesis via de novo pathway; (S)-dihydroorotate from bicarbonate: step 2/3. In terms of biological role, catalyzes the condensation of carbamoyl phosphate and aspartate to form carbamoyl aspartate and inorganic phosphate, the committed step in the de novo pyrimidine nucleotide biosynthesis pathway. This chain is Aspartate carbamoyltransferase catalytic subunit 3, found in Shewanella halifaxensis (strain HAW-EB4).